A 300-amino-acid polypeptide reads, in one-letter code: Arginine/serine-rich protein 1 (300 aa).

The disordered stretch occupies residues 1-142 (MSSAAVSKYV…RGRSHHRRSY (142 aa)). Ser17 is subject to Phosphoserine. Positions 23-36 (SPSTSGSGRSSRLS) are enriched in low complexity. Basic residues predominate over residues 37 to 104 (SRSRSRSSSR…RSRSRSRGHR (68 aa)). The segment covering 105-115 (YYRDSRYEQPR) has biased composition (basic and acidic residues). The segment covering 116 to 125 (RYYQSPSPYR) has biased composition (low complexity). Residues Ser120 and Ser122 each carry the phosphoserine modification. Over residues 126–141 (SRSRSRSRGRSHHRRS) the composition is skewed to basic residues. Position 147 is an omega-N-methylarginine (Arg147). The disordered stretch occupies residues 222-300 (QGAVSCSGPK…KSPYGLWIPV (79 aa)). A compositionally biased stretch (basic and acidic residues) spans 268 to 277 (PLEKTTKAAV). Ser284 bears the Phosphoserine mark.

This sequence belongs to the RSRP family. Phosphorylated. Phosphorylation at Ser-120 and Ser-122 mediates the interaction with spliceosome proteins.

It is found in the nucleus. In terms of biological role, probably acts as a spliceosomal factor that contributes to spliceosome assembly and regulates the isoform switching of proteins such as PARP6. The protein is Arginine/serine-rich protein 1 (Rsrp1) of Rattus norvegicus (Rat).